The sequence spans 78 residues: RNA-binding protein Hfq (78 aa).

A Sm domain is found at 10-70 (DLFLNSVRKQ…ISTIMPSQPV (61 aa)).

Belongs to the Hfq family. As to quaternary structure, homohexamer.

In terms of biological role, RNA chaperone that binds small regulatory RNA (sRNAs) and mRNAs to facilitate mRNA translational regulation in response to envelope stress, environmental stress and changes in metabolite concentrations. Also binds with high specificity to tRNAs. The chain is RNA-binding protein Hfq from Brucella abortus (strain S19).